Reading from the N-terminus, the 428-residue chain is E3 ubiquitin-protein ligase RNF128 (428 aa).

A signal peptide spans 1-38 (MGPPLGAGVSCRGGCGSSRLLAWCFLLALSPQAPGSRG). Asn-48, Asn-59, and Asn-101 each carry an N-linked (GlcNAc...) asparagine glycan. Positions 75-183 (SPLEPVAGVL…LKGTKILQSI (109 aa)) constitute a PA domain. A helical membrane pass occupies residues 208-228 (IFFVSVSFFIITAATVGYFIF). The RING-type; atypical zinc finger occupies 277–318 (CAVCIELYKPNDLVRILTCNHIFHKTCVDPWLLEHRTCPMCK). Residues 346-428 (ISNSASSHEE…QETAVREIKS (83 aa)) form a disordered region. Positions 416–428 (TPHQETAVREIKS) are enriched in basic and acidic residues.

Post-translationally, auto-ubiquitinated. Controls the development of T-cell clonal anergy by ubiquitination.

Its subcellular location is the cytoplasm. It is found in the endomembrane system. The protein localises to the cytoskeleton. The protein resides in the perinuclear region. The enzyme catalyses S-ubiquitinyl-[E2 ubiquitin-conjugating enzyme]-L-cysteine + [acceptor protein]-L-lysine = [E2 ubiquitin-conjugating enzyme]-L-cysteine + N(6)-ubiquitinyl-[acceptor protein]-L-lysine.. Its pathway is protein modification; protein ubiquitination. Its function is as follows. E3 ubiquitin-protein ligase that catalyzes 'Lys-27', 'Lys-48'- or 'Lys-63'-linked polyubiquitin chains formation and plays a role in different biological processes such as modulation of immune response, cytoskeletal dynamics or protein homeostasis. Inhibits IL2 and IL4 transcription, thereby playing an important role in the induction of the anergic phenotype, a long-term stable state of T-lymphocyte unresponsiveness to antigenic stimulation associated with the blockade of interleukin production. Ubiquitinates ARPC5 with 'Lys-48' linkages and COR1A with 'Lys-63' linkages leading to their degradation, down-regulation of these cytoskeletal components results in impaired lamellipodium formation and reduced accumulation of F-actin at the immunological synapse. Functions in the patterning of the dorsal ectoderm; sensitizes ectoderm to respond to neural-inducing signals. Plays a positive role in innate immune response by promoting 'Lys-63'-linked ubiquitination of TBK1 after RNA- or DNA-virus infection. Regulates alveolar macrophage activation and neutrophil infiltration by interacting with TLR4, targeting it for degradation, and inhibiting NF-kappa-B activation, hence decreasing pro-inflammatory cytokines. Negatively regulates the IL-3/STAT5 signaling pathway by facilitating 'Lys-27'-linked polyubiquitination of IL3RA leading to its degradation via lysosomal pathway. Directly regulates the N-glycosylation process in the endoplasmic reticulum by targeting the glycosyl-transferase RPN1 for ubiquitination and degradation. Other substrates targeted for degradation by RNF128 include transmembrane proteins CD40L, CD83 or the tetraspanin CD151. This chain is E3 ubiquitin-protein ligase RNF128 (RNF128), found in Pongo abelii (Sumatran orangutan).